Reading from the N-terminus, the 28-residue chain is Odorant-binding protein 1 (28 aa).

The protein belongs to the calycin superfamily. Lipocalin family. As to expression, nasal mucosa.

The protein localises to the secreted. Its subcellular location is the extracellular space. This soluble protein may play a specific role in odor discrimination and perception. This Hystrix cristata (North African crested porcupine) protein is Odorant-binding protein 1.